A 276-amino-acid polypeptide reads, in one-letter code: NH(3)-dependent NAD(+) synthetase (276 aa).

Residue 43 to 50 (GISGGVDS) participates in ATP binding. Residue aspartate 49 coordinates Mg(2+). Deamido-NAD(+) is bound at residue arginine 146. Threonine 166 lines the ATP pocket. Glutamate 171 provides a ligand contact to Mg(2+). Deamido-NAD(+) is bound by residues lysine 179 and aspartate 186. Residues lysine 195 and threonine 217 each coordinate ATP. Position 266–267 (266–267 (HK)) interacts with deamido-NAD(+).

This sequence belongs to the NAD synthetase family. As to quaternary structure, homodimer.

It catalyses the reaction deamido-NAD(+) + NH4(+) + ATP = AMP + diphosphate + NAD(+) + H(+). Its pathway is cofactor biosynthesis; NAD(+) biosynthesis; NAD(+) from deamido-NAD(+) (ammonia route): step 1/1. Its function is as follows. Catalyzes the ATP-dependent amidation of deamido-NAD to form NAD. Uses ammonia as a nitrogen source. This Vibrio vulnificus (strain CMCP6) protein is NH(3)-dependent NAD(+) synthetase.